The chain runs to 389 residues: Metal tolerance protein 2 (389 aa).

The Cytoplasmic portion of the chain corresponds to 1–81 (MGFRLAHLAA…GGEASERIFR (81 aa)). Residues 82 to 102 (LGLAADVVLTVGKAVTGYLSG) form a helical membrane-spanning segment. Topologically, residues 103 to 104 (ST) are vacuolar. A helical membrane pass occupies residues 105–125 (AIAADAAHSLSDIVLSGVALL). Residues 126–148 (SYKAAKAPRDKEHPYGHGKFESL) are Cytoplasmic-facing. A helical transmembrane segment spans residues 149 to 169 (GALGISSMLLVTAGGIAWHAF). Residues 170–206 (DVLQGVMSSAPDIIGNVSHAHHSHGSSGHHHGIDLEH) are Vacuolar-facing. Residues 207-227 (PILALSVTAFAISVKEGLYWI) traverse the membrane as a helical segment. At 228 to 250 (TKRAGEKEGSGLMKANAWHHRSD) the chain is on the cytoplasmic side. Residues 251–271 (AISSVVALLGVGGSILGVPYL) traverse the membrane as a helical segment. The Vacuolar portion of the chain corresponds to 272–275 (DPLA). The helical transmembrane segment at 276–296 (GLVVSGMILKAGVHTGYESVL) threads the bilayer. Topologically, residues 297-389 (ELVDAAVDPS…SLQPLNQNAL (93 aa)) are cytoplasmic.

This sequence belongs to the cation diffusion facilitator (CDF) transporter (TC 2.A.4) family. SLC30A subfamily.

The protein resides in the vacuole membrane. Involved in sequestration of excess metal in the cytoplasm into vacuoles to maintain metal homeostasis. This Oryza sativa subsp. japonica (Rice) protein is Metal tolerance protein 2 (MTP2).